A 313-amino-acid polypeptide reads, in one-letter code: Ribosomal RNA small subunit methyltransferase H (313 aa).

Residues 51-53 (GGH), aspartate 71, phenylalanine 98, aspartate 119, and glutamine 126 contribute to the S-adenosyl-L-methionine site. The segment at 293–313 (EEQRANPRSRSARLRVAERVS) is disordered.

The protein belongs to the methyltransferase superfamily. RsmH family.

Its subcellular location is the cytoplasm. It catalyses the reaction cytidine(1402) in 16S rRNA + S-adenosyl-L-methionine = N(4)-methylcytidine(1402) in 16S rRNA + S-adenosyl-L-homocysteine + H(+). In terms of biological role, specifically methylates the N4 position of cytidine in position 1402 (C1402) of 16S rRNA. The protein is Ribosomal RNA small subunit methyltransferase H of Roseiflexus sp. (strain RS-1).